A 180-amino-acid polypeptide reads, in one-letter code: Crossover junction endodeoxyribonuclease RuvC (180 aa).

Catalysis depends on residues D13, E73, and D145. Mg(2+)-binding residues include D13, E73, and D145.

It belongs to the RuvC family. Homodimer which binds Holliday junction (HJ) DNA. The HJ becomes 2-fold symmetrical on binding to RuvC with unstacked arms; it has a different conformation from HJ DNA in complex with RuvA. In the full resolvosome a probable DNA-RuvA(4)-RuvB(12)-RuvC(2) complex forms which resolves the HJ. Mg(2+) is required as a cofactor.

The protein localises to the cytoplasm. The catalysed reaction is Endonucleolytic cleavage at a junction such as a reciprocal single-stranded crossover between two homologous DNA duplexes (Holliday junction).. The RuvA-RuvB-RuvC complex processes Holliday junction (HJ) DNA during genetic recombination and DNA repair. Endonuclease that resolves HJ intermediates. Cleaves cruciform DNA by making single-stranded nicks across the HJ at symmetrical positions within the homologous arms, yielding a 5'-phosphate and a 3'-hydroxyl group; requires a central core of homology in the junction. The consensus cleavage sequence is 5'-(A/T)TT(C/G)-3'. Cleavage occurs on the 3'-side of the TT dinucleotide at the point of strand exchange. HJ branch migration catalyzed by RuvA-RuvB allows RuvC to scan DNA until it finds its consensus sequence, where it cleaves and resolves the cruciform DNA. The chain is Crossover junction endodeoxyribonuclease RuvC from Magnetococcus marinus (strain ATCC BAA-1437 / JCM 17883 / MC-1).